The chain runs to 219 residues: Polysialic acid transport ATP-binding protein KpsT (219 aa).

Residues 2-218 (IKIENLTKSY…TEAIADYKKD (217 aa)) form the ABC transporter domain. 38–45 (GQNGAGKS) contacts ATP.

The protein belongs to the ABC transporter superfamily.

It localises to the cell inner membrane. Its function is as follows. Putative ATP-binding protein, and an energy coupling component for the transport of polysialic acid across the cytoplasmic membrane. The polypeptide is Polysialic acid transport ATP-binding protein KpsT (kpsT) (Escherichia coli).